Reading from the N-terminus, the 367-residue chain is Apolipoprotein A-V (367 aa).

Positions M1–T20 are cleaved as a signal peptide. At S56 the chain carries Phosphoserine. The disordered stretch occupies residues L71–G90.

It belongs to the apolipoprotein A1/A4/E family. As to quaternary structure, interacts with GPIHBP1. Interacts with SORL1; this interaction leads to APOA5 internalization and sorting either to lysosomes and degradation, or to the trans-Golgi network. Post-translationally, phosphorylated by FAM20C in the extracellular medium.

The protein resides in the secreted. The protein localises to the early endosome. It localises to the late endosome. Its subcellular location is the golgi apparatus. It is found in the trans-Golgi network. Functionally, minor apolipoprotein mainly associated with HDL and to a lesser extent with VLDL. May also be associated with chylomicrons. Important determinant of plasma triglyceride (TG) levels by both being a potent stimulator of apo-CII lipoprotein lipase (LPL) TG hydrolysis and an inhibitor of the hepatic VLDL-TG production rate (without affecting the VLDL-apoB production rate). Activates poorly lecithin:cholesterol acyltransferase (LCAT) and does not enhance efflux of cholesterol from macrophages. Binds heparin. This chain is Apolipoprotein A-V (APOA5), found in Neomonachus schauinslandi (Hawaiian monk seal).